Here is a 95-residue protein sequence, read N- to C-terminus: Small ribosomal subunit protein bS6 (95 aa).

This sequence belongs to the bacterial ribosomal protein bS6 family.

In terms of biological role, binds together with bS18 to 16S ribosomal RNA. This is Small ribosomal subunit protein bS6 from Bacillus licheniformis (strain ATCC 14580 / DSM 13 / JCM 2505 / CCUG 7422 / NBRC 12200 / NCIMB 9375 / NCTC 10341 / NRRL NRS-1264 / Gibson 46).